Reading from the N-terminus, the 233-residue chain is MSDSEQTSSGTASSGSKMKDFNQRFRDLHKMRQKARKENHAQVVEEDRRKKLPKNFEAKKERDQWQVKELQDRKEAEDKGLDYERVRSLEMSADVTEKLEQKRKRKKNPDQGFASYEDMTLRQHTRLTAALDPDLESYKKMKECVGGDQFYPTADTLIHGNHYPTTSAMDRLVKDVHGQVKRREQYHRRRLYDPDAPIDYINEKNKKFNKKLDKYYGKYTEDIKDDLERGTAI.

The segment covering 1 to 16 (MSDSEQTSSGTASSGS) has biased composition (polar residues). Disordered regions lie at residues 1–80 (MSDS…EDKG) and 95–119 (VTEK…YEDM). Basic and acidic residues predominate over residues 17-80 (KMKDFNQRFR…QDRKEAEDKG (64 aa)). Residues 18–77 (MKDFNQRFRDLHKMRQKARKENHAQVVEEDRRKKLPKNFEAKKERDQWQVKELQDRKEAE) adopt a coiled-coil conformation.

Belongs to the SYF2 family. May be part of a spliceosome complex.

It is found in the nucleus. In terms of biological role, may be involved in pre-mRNA splicing. The chain is Pre-mRNA-splicing factor syf-2 from Caenorhabditis briggsae.